A 612-amino-acid polypeptide reads, in one-letter code: Probable Xaa-Pro aminopeptidase P (612 aa).

Residues D409, D420, E518, and E532 each contribute to the Mn(2+) site.

This sequence belongs to the peptidase M24B family. It depends on Mn(2+) as a cofactor.

The catalysed reaction is Release of any N-terminal amino acid, including proline, that is linked to proline, even from a dipeptide or tripeptide.. Its function is as follows. Catalyzes the removal of a penultimate prolyl residue from the N-termini of peptides. In Verticillium alfalfae (strain VaMs.102 / ATCC MYA-4576 / FGSC 10136) (Verticillium wilt of alfalfa), this protein is Probable Xaa-Pro aminopeptidase P (AMPP).